Consider the following 76-residue polypeptide: Candidate secreted effector protein MPL124497 (76 aa).

Residues 1–21 form the signal peptide; the sequence is MKLIIFAAISVAFMSFDQVLG.

It belongs to the CPGH1 family.

It is found in the secreted. It localises to the host cell. The protein resides in the host cytoplasm. The protein localises to the host nucleus. Functionally, rust effector delivered into infected tissues to modulate host functions and contribute to pathogen virulence. Enhances leaf colonization by the bacteria Pseudomonas syringae and the oomycete Hyaloperonospora arabidopsidis pathogens in an Arabidopsis thaliana infection model. This is Candidate secreted effector protein MPL124497 from Melampsora larici-populina (strain 98AG31 / pathotype 3-4-7) (Poplar leaf rust fungus).